Reading from the N-terminus, the 518-residue chain is Protein nucleotidyltransferase YdiU (518 aa).

Residues 1-22 are disordered; it reads MTHLQFDNRLRAELPGDPEEGP. Residues glycine 100, glycine 102, arginine 103, lysine 123, aspartate 135, glycine 136, arginine 193, and arginine 200 each coordinate ATP. Catalysis depends on aspartate 270, which acts as the Proton acceptor. 2 residues coordinate Mg(2+): asparagine 271 and aspartate 280. Aspartate 280 lines the ATP pocket.

This sequence belongs to the SELO family. The cofactor is Mg(2+). Mn(2+) serves as cofactor.

The catalysed reaction is L-seryl-[protein] + ATP = 3-O-(5'-adenylyl)-L-seryl-[protein] + diphosphate. It catalyses the reaction L-threonyl-[protein] + ATP = 3-O-(5'-adenylyl)-L-threonyl-[protein] + diphosphate. The enzyme catalyses L-tyrosyl-[protein] + ATP = O-(5'-adenylyl)-L-tyrosyl-[protein] + diphosphate. It carries out the reaction L-histidyl-[protein] + UTP = N(tele)-(5'-uridylyl)-L-histidyl-[protein] + diphosphate. The catalysed reaction is L-seryl-[protein] + UTP = O-(5'-uridylyl)-L-seryl-[protein] + diphosphate. It catalyses the reaction L-tyrosyl-[protein] + UTP = O-(5'-uridylyl)-L-tyrosyl-[protein] + diphosphate. Its function is as follows. Nucleotidyltransferase involved in the post-translational modification of proteins. It can catalyze the addition of adenosine monophosphate (AMP) or uridine monophosphate (UMP) to a protein, resulting in modifications known as AMPylation and UMPylation. This Xanthomonas campestris pv. campestris (strain 8004) protein is Protein nucleotidyltransferase YdiU.